The sequence spans 557 residues: 2-succinyl-5-enolpyruvyl-6-hydroxy-3-cyclohexene-1-carboxylate synthase (557 aa).

This sequence belongs to the TPP enzyme family. MenD subfamily. Homodimer. It depends on Mg(2+) as a cofactor. Mn(2+) serves as cofactor. Requires thiamine diphosphate as cofactor.

The catalysed reaction is isochorismate + 2-oxoglutarate + H(+) = 5-enolpyruvoyl-6-hydroxy-2-succinyl-cyclohex-3-ene-1-carboxylate + CO2. It functions in the pathway quinol/quinone metabolism; 1,4-dihydroxy-2-naphthoate biosynthesis; 1,4-dihydroxy-2-naphthoate from chorismate: step 2/7. It participates in quinol/quinone metabolism; menaquinone biosynthesis. Catalyzes the thiamine diphosphate-dependent decarboxylation of 2-oxoglutarate and the subsequent addition of the resulting succinic semialdehyde-thiamine pyrophosphate anion to isochorismate to yield 2-succinyl-5-enolpyruvyl-6-hydroxy-3-cyclohexene-1-carboxylate (SEPHCHC). This chain is 2-succinyl-5-enolpyruvyl-6-hydroxy-3-cyclohexene-1-carboxylate synthase, found in Phocaeicola vulgatus (strain ATCC 8482 / DSM 1447 / JCM 5826 / CCUG 4940 / NBRC 14291 / NCTC 11154) (Bacteroides vulgatus).